A 421-amino-acid chain; its full sequence is Serine--tRNA ligase (421 aa).

232–234 (TAE) is an L-serine binding site. Position 262–264 (262–264 (RSE)) interacts with ATP. Glu285 is an L-serine binding site. 349-352 (EVSS) is an ATP binding site. Position 384 (Ser384) interacts with L-serine.

It belongs to the class-II aminoacyl-tRNA synthetase family. Type-1 seryl-tRNA synthetase subfamily. As to quaternary structure, homodimer. The tRNA molecule binds across the dimer.

It is found in the cytoplasm. The enzyme catalyses tRNA(Ser) + L-serine + ATP = L-seryl-tRNA(Ser) + AMP + diphosphate + H(+). The catalysed reaction is tRNA(Sec) + L-serine + ATP = L-seryl-tRNA(Sec) + AMP + diphosphate + H(+). Its pathway is aminoacyl-tRNA biosynthesis; selenocysteinyl-tRNA(Sec) biosynthesis; L-seryl-tRNA(Sec) from L-serine and tRNA(Sec): step 1/1. Catalyzes the attachment of serine to tRNA(Ser). Is also able to aminoacylate tRNA(Sec) with serine, to form the misacylated tRNA L-seryl-tRNA(Sec), which will be further converted into selenocysteinyl-tRNA(Sec). This chain is Serine--tRNA ligase, found in Mycoplasma mobile (strain ATCC 43663 / 163K / NCTC 11711) (Mesomycoplasma mobile).